The chain runs to 432 residues: Adenylosuccinate synthetase (432 aa).

Residues 13 to 19 (GDEGKGK) and 41 to 43 (GHT) contribute to the GTP site. Residue Asp14 is the Proton acceptor of the active site. Mg(2+)-binding residues include Asp14 and Gly41. IMP is bound by residues 14–17 (DEGK), 39–42 (NAGH), Thr130, Arg144, Gln225, Thr240, and Arg304. His42 functions as the Proton donor in the catalytic mechanism. 300-306 (ATTGRRR) contacts substrate. Residues Arg306, 332-334 (KLD), and 415-417 (STG) each bind GTP.

The protein belongs to the adenylosuccinate synthetase family. As to quaternary structure, homodimer. Mg(2+) serves as cofactor.

The protein localises to the cytoplasm. The catalysed reaction is IMP + L-aspartate + GTP = N(6)-(1,2-dicarboxyethyl)-AMP + GDP + phosphate + 2 H(+). It functions in the pathway purine metabolism; AMP biosynthesis via de novo pathway; AMP from IMP: step 1/2. Functionally, plays an important role in the de novo pathway of purine nucleotide biosynthesis. Catalyzes the first committed step in the biosynthesis of AMP from IMP. The chain is Adenylosuccinate synthetase from Salmonella agona (strain SL483).